A 1284-amino-acid polypeptide reads, in one-letter code: Zinc finger protein 423 (1284 aa).

Disordered regions lie at residues 1–64 (MHKK…MEDE) and 87–117 (AHRC…SPTQ). A compositionally biased stretch (basic and acidic residues) spans 34 to 46 (CDQKTSRALEDRN). Residues S47 and S50 each carry the phosphoserine modification. Residues 54–64 (RNEDDEDMEDE) are compositionally biased toward acidic residues. A C2H2-type 1; degenerate zinc finger spans residues 67-93 (YTCDHCQQDFESLADLTDHRAHRCPGD). The segment covering 102-117 (WVASSPSSKDVASPTQ) has biased composition (polar residues). 7 C2H2-type zinc fingers span residues 138–160 (YPCQ…EQIH), 166–188 (FKCT…IKLH), 194–216 (YHCH…LKTH), 222–244 (FKCT…MQAH), 263–286 (FMCD…LTRH), 295–318 (LQCI…HQAH), and 323–345 (HKCP…LDSH). Residues 346-398 (RQPDSSNHSVSPDPVLGSVASMSSATPDSSASVERGSTPDSTLKPLRGQKKMR) are disordered. Residues 363–377 (SVASMSSATPDSSAS) show a composition bias toward low complexity. The segment at 409 to 433 (YSCPYCSKRDFNSLAVLEIHLKTIH) adopts a C2H2-type 9; degenerate zinc-finger fold. C2H2-type zinc fingers lie at residues 441–464 (HTCQ…RKLH), 480–503 (FHCN…RVSH), and 517–540 (FFCN…QQAH). The segment at 563-588 (YSCPYCTNSPIFGSILKLTKHIKENH) adopts a C2H2-type 13; atypical zinc-finger fold. Residues 590-624 (NIPLAHSKKSKAEQSPVSSDVEVSSPKRQRLSASA) are disordered. S604 carries the phosphoserine modification. Positions 604 to 615 (SPVSSDVEVSSP) are enriched in low complexity. 7 C2H2-type zinc fingers span residues 632–654 (YPCN…LKLH), 662–684 (QACP…LTVH), 692–715 (YVCE…LDMH), 720–743 (YHCT…AVKH), 750–773 (YRCT…KHSH), 781–803 (HKCI…ITTH), and 807–830 (YNCK…REKH). A C2H2-type 21; degenerate zinc finger spans residues 886–908 (YGCDICGAAYTMEVLLQNHRLRD). 3 consecutive C2H2-type zinc fingers follow at residues 930-952 (HKCN…LQTH), 959-981 (YMCP…KVTH), and 1020-1042 (FRCV…GTFH). S1054 bears the Phosphoserine mark. The segment at 1064-1082 (YKCALCLKEFRSKQDLVKL) adopts a C2H2-type 25; degenerate zinc-finger fold. 5 consecutive C2H2-type zinc fingers follow at residues 1120–1143 (LRCP…QVDH), 1168–1190 (YQCI…VANH), 1198–1220 (HECK…LIEH), 1229–1252 (FKCP…FAVH), and 1259–1282 (YDCS…MSQH). Residues 1136–1147 (ESHMQVDHRDLT) are compositionally biased toward basic and acidic residues. The segment at 1136–1163 (ESHMQVDHRDLTPETSGPRKGTQTSPVP) is disordered.

It belongs to the krueppel C2H2-type zinc-finger protein family. Homodimer. Interacts with EBF1. Interacts with SMAD1 and SMAD4. Interacts with PARP1. Interacts with CEP290. Expressed in brain, lung, skeletal muscle, heart, pancreas and kidney but not liver or placenta. Also expressed in aorta, ovary, pituitary, small intestine, fetal brain, fetal kidney and, within the adult brain, in the substantia nigra, medulla, amygdala, thalamus and cerebellum.

It is found in the nucleus. Functionally, transcription factor that can both act as an activator or a repressor depending on the context. Plays a central role in BMP signaling and olfactory neurogenesis. Associates with SMADs in response to BMP2 leading to activate transcription of BMP target genes. Acts as a transcriptional repressor via its interaction with EBF1, a transcription factor involved in terminal olfactory receptor neurons differentiation; this interaction preventing EBF1 to bind DNA and activate olfactory-specific genes. Involved in olfactory neurogenesis by participating in a developmental switch that regulates the transition from differentiation to maturation in olfactory receptor neurons. Controls proliferation and differentiation of neural precursors in cerebellar vermis formation. This Homo sapiens (Human) protein is Zinc finger protein 423 (ZNF423).